Here is a 491-residue protein sequence, read N- to C-terminus: Serralysin (491 aa).

A propeptide spanning residues 1 to 16 (MGSFLLKKAVGLSNIS) is cleaved from the precursor. Residue histidine 186 coordinates Zn(2+). Glutamate 187 is an active-site residue. Residues histidine 190, histidine 196, and tyrosine 226 each coordinate Zn(2+). Arginine 263, glycine 265, aspartate 295, glycine 297, glycine 298, aspartate 300, threonine 337, glutamate 339, glycine 344, glycine 346, aspartate 348, asparagine 353, alanine 355, asparagine 357, glycine 361, glycine 362, glycine 364, aspartate 366, glycine 370, glycine 373, aspartate 384, glycine 388, glycine 389, glycine 391, aspartate 402, aspartate 409, and aspartate 419 together coordinate Ca(2+). Hemolysin-type calcium-binding repeat units follow at residues 342–359 (IGGF…DNTL), 360–377 (IGGE…NNTI), and 378–395 (YGGR…SNTF).

The protein belongs to the peptidase M10B family. The cofactor is Ca(2+). It depends on Zn(2+) as a cofactor.

It localises to the secreted. It carries out the reaction Preferential cleavage of bonds with hydrophobic residues in P1'.. With respect to regulation, ca(2+) increases protease activity. In terms of biological role, one of the virulence factors produced during swarmer cell differentiation of the bacteria, which seems to be associated with pathogenesis. The protease activity is limited to IgA1, IgA2, as well as IgG degradation. The sequence is that of Serralysin (zapA) from Proteus mirabilis.